Consider the following 113-residue polypeptide: Protein translation factor SUI1 homolog 2 (113 aa).

The residue at position 2 (Ser2) is an N-acetylserine.

It belongs to the SUI1 family.

Probably involved in translation. The protein is Protein translation factor SUI1 homolog 2 of Arabidopsis thaliana (Mouse-ear cress).